The sequence spans 469 residues: Phenylalanine--tRNA ligase alpha subunit (469 aa).

Residues T309, 348-350, and F388 contribute to the L-phenylalanine site; that span reads QLD. E390 contacts Mg(2+).

It belongs to the class-II aminoacyl-tRNA synthetase family. Phe-tRNA synthetase alpha subunit type 2 subfamily. Tetramer of two alpha and two beta subunits. Mg(2+) is required as a cofactor.

Its subcellular location is the cytoplasm. The enzyme catalyses tRNA(Phe) + L-phenylalanine + ATP = L-phenylalanyl-tRNA(Phe) + AMP + diphosphate + H(+). This is Phenylalanine--tRNA ligase alpha subunit from Sulfurisphaera tokodaii (strain DSM 16993 / JCM 10545 / NBRC 100140 / 7) (Sulfolobus tokodaii).